The chain runs to 195 residues: GTP cyclohydrolase 1 (195 aa).

Residues Cys85, His88, and Cys157 each coordinate Zn(2+).

Belongs to the GTP cyclohydrolase I family. In terms of assembly, toroid-shaped homodecamer, composed of two pentamers of five dimers.

It carries out the reaction GTP + H2O = 7,8-dihydroneopterin 3'-triphosphate + formate + H(+). The protein operates within cofactor biosynthesis; 7,8-dihydroneopterin triphosphate biosynthesis; 7,8-dihydroneopterin triphosphate from GTP: step 1/1. This chain is GTP cyclohydrolase 1, found in Clostridium acetobutylicum (strain ATCC 824 / DSM 792 / JCM 1419 / IAM 19013 / LMG 5710 / NBRC 13948 / NRRL B-527 / VKM B-1787 / 2291 / W).